We begin with the raw amino-acid sequence, 263 residues long: CRISPR-associated protein Cas5 2 (263 aa).

It belongs to the CRISPR-associated protein Cas5 family. Subtype I-A/Apern subfamily. Part of the aCascade ribonucleoprotein complex, minimally composed of Csa2 and Cas5a, which binds crRNA. Other possible components of aCascade in strain P1 are Cas6b (SSO1437) and Csa5 (SSO1443), while SSO1399, Cas5b (SSO1400) and SSO1401 have sometimes been seen weakly associated. Csa2 is probably the major RNA-binding subunit. The Csa2-Cas5a-crRNA complex also binds target DNA homologous to crRNA, probably forming an R-loop. Purified aCascade forms a filament about 6 nm in width.

Its function is as follows. CRISPR (clustered regularly interspaced short palindromic repeat) is an adaptive immune system that provides protection against mobile genetic elements (viruses, transposable elements and conjugative plasmids). CRISPR clusters contain spacers, sequences complementary to antecedent mobile elements, and target invading nucleic acids. CRISPR clusters are transcribed and processed into CRISPR RNA (crRNA). This is CRISPR-associated protein Cas5 2 (cas5b) from Saccharolobus solfataricus (strain ATCC 35092 / DSM 1617 / JCM 11322 / P2) (Sulfolobus solfataricus).